Reading from the N-terminus, the 147-residue chain is Probable disulfide formation protein (147 aa).

The chain crosses the membrane as a helical span at residues 9 to 28 (NYSLYFAWLTALIATLGSLY). Cys-38 and Cys-41 are oxidised to a cystine. Transmembrane regions (helical) follow at residues 43–62 (YQRVCIYPLTILLGIAAYRT) and 69–86 (YALPLVVLGFLFSVYQYL). Residues Cys-99 and Cys-106 are joined by a disulfide bond. A helical transmembrane segment spans residues 115 to 138 (GFITLPFLGMLATLIMSFFLIMAF).

The protein belongs to the DsbB family. BdbC subfamily.

The protein resides in the cell inner membrane. In terms of biological role, required for disulfide bond formation in some proteins. This chain is Probable disulfide formation protein, found in Coxiella burnetii (strain CbuG_Q212) (Coxiella burnetii (strain Q212)).